The following is a 463-amino-acid chain: Kynureninase 2 (463 aa).

Pyridoxal 5'-phosphate is bound by residues L134, T135, 162 to 165, D247, H250, and Y272; that span reads FPSD. K273 is modified (N6-(pyridoxal phosphate)lysine). W312 and N340 together coordinate pyridoxal 5'-phosphate.

Belongs to the kynureninase family. As to quaternary structure, homodimer. Requires pyridoxal 5'-phosphate as cofactor.

The protein localises to the cytoplasm. The enzyme catalyses L-kynurenine + H2O = anthranilate + L-alanine + H(+). It catalyses the reaction 3-hydroxy-L-kynurenine + H2O = 3-hydroxyanthranilate + L-alanine + H(+). It participates in amino-acid degradation; L-kynurenine degradation; L-alanine and anthranilate from L-kynurenine: step 1/1. The protein operates within cofactor biosynthesis; NAD(+) biosynthesis; quinolinate from L-kynurenine: step 2/3. Functionally, catalyzes the cleavage of L-kynurenine (L-Kyn) and L-3-hydroxykynurenine (L-3OHKyn) into anthranilic acid (AA) and 3-hydroxyanthranilic acid (3-OHAA), respectively. The chain is Kynureninase 2 (bna5-2) from Aspergillus terreus (strain NIH 2624 / FGSC A1156).